Here is a 196-residue protein sequence, read N- to C-terminus: Large ribosomal subunit protein uL5 (196 aa).

The protein belongs to the universal ribosomal protein uL5 family. As to quaternary structure, part of the 50S ribosomal subunit; part of the 5S rRNA/L5/L18/L25 subcomplex. Contacts the 5S rRNA and the P site tRNA. Forms a bridge to the 30S subunit in the 70S ribosome.

In terms of biological role, this is one of the proteins that bind and probably mediate the attachment of the 5S RNA into the large ribosomal subunit, where it forms part of the central protuberance. In the 70S ribosome it contacts protein S13 of the 30S subunit (bridge B1b), connecting the 2 subunits; this bridge is implicated in subunit movement. Contacts the P site tRNA; the 5S rRNA and some of its associated proteins might help stabilize positioning of ribosome-bound tRNAs. The protein is Large ribosomal subunit protein uL5 of Rhodopirellula baltica (strain DSM 10527 / NCIMB 13988 / SH1).